The primary structure comprises 510 residues: MIWHVQNENFILDSTRIFMKAFHLLLFHGSFIFPECILIFGLILLLMIDSTSDQKDIPWLYFISSTSLVMSITALLFRWREEPMISFSGNFQTNNFNEIFQFLILLCSTLCIPLSVEYIECTEMAITEFLLFVLTATLGGMFLCGANDLITIFVAPECFSLCSYLLSGYTKRDVRSNEATTKYLLMGGASSSILVHGFSWLYGSSGGEIELQEIVNGLINTQMYNSPGISIALIFITVGIGFKLSPAPSHQWTPDVYEGSPTPVVAFLSVTSKVAASASATRIFDIPFYFSSNEWHLLLEILAILSMILGNLIAITQTSMKRMLAYSSIGQIGYVIIGIIVGDSNDGYASMITYMLFYISMNLGTFARIVSFGLRTGTDNIRDYAGLYTKDPFLALSSALCLLSLGGLPPLAGFFGKLHLFWCGWQAGLYFLVSIGLLTSVVSIYYYLKIIKLLMTGRNQEITPHVRNYRRSPLRSNNSIELSMIVCVIASTIPGISMNPIIAIAQDTLF.

13 consecutive transmembrane segments (helical) span residues 24 to 44, 57 to 77, 99 to 119, 124 to 144, 149 to 169, 183 to 203, 227 to 247, 295 to 315, 323 to 343, 347 to 367, 395 to 415, 418 to 438, and 484 to 504; these read LLLF…GLIL, IPWL…ALLF, IFQF…VEYI, MAIT…MFLC, LITI…LSGY, YLLM…WLYG, PGIS…LSPA, WHLL…LIAI, MLAY…IVGD, GYAS…GTFA, ALSS…AGFF, LHLF…IGLL, and MIVC…IIAI.

This sequence belongs to the complex I subunit 2 family. In terms of assembly, NDH is composed of at least 16 different subunits, 5 of which are encoded in the nucleus.

Its subcellular location is the plastid. It localises to the chloroplast thylakoid membrane. It carries out the reaction a plastoquinone + NADH + (n+1) H(+)(in) = a plastoquinol + NAD(+) + n H(+)(out). The catalysed reaction is a plastoquinone + NADPH + (n+1) H(+)(in) = a plastoquinol + NADP(+) + n H(+)(out). Functionally, NDH shuttles electrons from NAD(P)H:plastoquinone, via FMN and iron-sulfur (Fe-S) centers, to quinones in the photosynthetic chain and possibly in a chloroplast respiratory chain. The immediate electron acceptor for the enzyme in this species is believed to be plastoquinone. Couples the redox reaction to proton translocation, and thus conserves the redox energy in a proton gradient. In Platanus occidentalis (Sycamore), this protein is NAD(P)H-quinone oxidoreductase subunit 2 A, chloroplastic.